The chain runs to 387 residues: Lipid-A-disaccharide synthase (387 aa).

It belongs to the LpxB family.

It catalyses the reaction 2-N,3-O-bis[(3R)-3-hydroxytetradecanoyl]-alpha-D-glucosaminyl 1-phosphate + UDP-2-N,3-O-bis[(3R)-3-hydroxytetradecanoyl]-alpha-D-glucosamine = lipid A disaccharide (E. coli) + UDP + H(+). The enzyme catalyses a lipid X + a UDP-2-N,3-O-bis[(3R)-3-hydroxyacyl]-alpha-D-glucosamine = a lipid A disaccharide + UDP + H(+). The protein operates within glycolipid biosynthesis; lipid IV(A) biosynthesis; lipid IV(A) from (3R)-3-hydroxytetradecanoyl-[acyl-carrier-protein] and UDP-N-acetyl-alpha-D-glucosamine: step 5/6. Functionally, condensation of UDP-2,3-diacylglucosamine and 2,3-diacylglucosamine-1-phosphate to form lipid A disaccharide, a precursor of lipid A, a phosphorylated glycolipid that anchors the lipopolysaccharide to the outer membrane of the cell. This is Lipid-A-disaccharide synthase from Blochmanniella pennsylvanica (strain BPEN).